Here is a 396-residue protein sequence, read N- to C-terminus: Elongation factor Tu (396 aa).

Positions 10 to 205 (KPHVNVGTIG…AVDEYIPTPE (196 aa)) constitute a tr-type G domain. Residues 19–26 (GHVDHGKT) form a G1 region. A GTP-binding site is contributed by 19–26 (GHVDHGKT). A Mg(2+)-binding site is contributed by Thr26. Residues 61-65 (GITIA) are G2. The segment at 82-85 (DCPG) is G3. GTP is bound by residues 82–86 (DCPGH) and 137–140 (NKTD). A G4 region spans residues 137 to 140 (NKTD). A G5 region spans residues 175-177 (SAL).

The protein belongs to the TRAFAC class translation factor GTPase superfamily. Classic translation factor GTPase family. EF-Tu/EF-1A subfamily. As to quaternary structure, monomer.

Its subcellular location is the cytoplasm. The enzyme catalyses GTP + H2O = GDP + phosphate + H(+). In terms of biological role, GTP hydrolase that promotes the GTP-dependent binding of aminoacyl-tRNA to the A-site of ribosomes during protein biosynthesis. The sequence is that of Elongation factor Tu from Salinibacter ruber (strain DSM 13855 / M31).